The following is a 224-amino-acid chain: COMM domain-containing protein 5 (224 aa).

N-acetylserine is present on Ser2. Residues 151-215 (HIADFRWRVD…LVLKEMADLE (65 aa)) enclose the COMM domain.

The protein belongs to the COMM domain-containing protein 5 family. Component of the commander complex consisting of the CCC subcomplex and the retriever subcomplex. Component of the CCC (COMMD/CCDC22/CCDC93) subcomplex consisting of COMMD1, COMMD2, COMMD3, COMMD4, COMMD5, COMMD6, COMMD7, COMMD8, COMMD9, COMMD10, CCDC22 and CCDC93; within the complex forms a heterodimer with COMMD10. Interacts (via COMM domain) with COMMD1 (via COMM domain). Interacts with RELA, RELB, NFKB1/p105. Interacts with CCDC22, CCDC93, SCNN1B, CUL2, CUL3, CUL4A, CUL4B, CUL7.

The protein localises to the nucleus. Its subcellular location is the cytoplasm. Scaffold protein in the commander complex that is essential for endosomal recycling of transmembrane cargos; the commander complex is composed of the CCC subcomplex and the retriever subcomplex. May modulate activity of cullin-RING E3 ubiquitin ligase (CRL) complexes. Negatively regulates cell proliferation. Negatively regulates cell cycle G2/M phase transition probably by transactivating p21/CDKN1A through the p53/TP53-independent signaling pathway. Involved in kidney proximal tubule morphogenesis. Down-regulates activation of NF-kappa-B. The chain is COMM domain-containing protein 5 (COMMD5) from Bos taurus (Bovine).